The chain runs to 251 residues: Ubiquinone/menaquinone biosynthesis C-methyltransferase UbiE (251 aa).

Residues Thr74, Asp95, 123 to 124, and Ser140 contribute to the S-adenosyl-L-methionine site; that span reads NA.

The protein belongs to the class I-like SAM-binding methyltransferase superfamily. MenG/UbiE family.

The catalysed reaction is a 2-demethylmenaquinol + S-adenosyl-L-methionine = a menaquinol + S-adenosyl-L-homocysteine + H(+). The enzyme catalyses a 2-methoxy-6-(all-trans-polyprenyl)benzene-1,4-diol + S-adenosyl-L-methionine = a 5-methoxy-2-methyl-3-(all-trans-polyprenyl)benzene-1,4-diol + S-adenosyl-L-homocysteine + H(+). It functions in the pathway quinol/quinone metabolism; menaquinone biosynthesis; menaquinol from 1,4-dihydroxy-2-naphthoate: step 2/2. It participates in cofactor biosynthesis; ubiquinone biosynthesis. Functionally, methyltransferase required for the conversion of demethylmenaquinol (DMKH2) to menaquinol (MKH2) and the conversion of 2-polyprenyl-6-methoxy-1,4-benzoquinol (DDMQH2) to 2-polyprenyl-3-methyl-6-methoxy-1,4-benzoquinol (DMQH2). The protein is Ubiquinone/menaquinone biosynthesis C-methyltransferase UbiE of Cronobacter sakazakii (strain ATCC BAA-894) (Enterobacter sakazakii).